A 202-amino-acid polypeptide reads, in one-letter code: Tetranectin (202 aa).

An N-terminal signal peptide occupies residues 1-21 (MELWGPCVLLCLFSLLTQVTA). 3 cysteine pairs are disulfide-bonded: Cys71–Cys81, Cys98–Cys197, and Cys173–Cys189. Residues 77–198 (VHMKCFLAFV…CRDKLPYVCQ (122 aa)) enclose the C-type lectin domain.

In terms of assembly, homotrimer.

The protein resides in the secreted. Tetranectin binds to plasminogen and to isolated kringle 4. May be involved in the packaging of molecules destined for exocytosis. Plays a role in retinal function. This chain is Tetranectin (CLEC3B), found in Bos taurus (Bovine).